The following is a 101-amino-acid chain: NADH-quinone oxidoreductase subunit K (101 aa).

The next 3 helical transmembrane spans lie at 4-24, 30-50, and 61-81; these read LAHYLVLGAILFAISIVGIFL, IIILMAIELMLLAVNTNFVAF, and IFVFFVLTVAAAEAAIGLAIL.

This sequence belongs to the complex I subunit 4L family. As to quaternary structure, NDH-1 is composed of 14 different subunits. Subunits NuoA, H, J, K, L, M, N constitute the membrane sector of the complex.

Its subcellular location is the cell inner membrane. It catalyses the reaction a quinone + NADH + 5 H(+)(in) = a quinol + NAD(+) + 4 H(+)(out). Functionally, NDH-1 shuttles electrons from NADH, via FMN and iron-sulfur (Fe-S) centers, to quinones in the respiratory chain. The immediate electron acceptor for the enzyme in this species is believed to be ubiquinone. Couples the redox reaction to proton translocation (for every two electrons transferred, four hydrogen ions are translocated across the cytoplasmic membrane), and thus conserves the redox energy in a proton gradient. The sequence is that of NADH-quinone oxidoreductase subunit K from Paraburkholderia xenovorans (strain LB400).